A 487-amino-acid polypeptide reads, in one-letter code: NAD-dependent histone deacetylase HST3 (487 aa).

One can recognise a Deacetylase sirtuin-type domain in the interval 15 to 336; the sequence is PADTSIKLHE…FLTQEQLDSE (322 aa). NAD(+) contacts are provided by residues 40-59 and 129-132; these read GAGISCNAGIPDFRSSDGLY and QNID. His-167 (proton acceptor) is an active-site residue. Zn(2+) contacts are provided by Cys-175, Cys-178, Cys-200, and Cys-203. NAD(+) contacts are provided by residues 261–263, 291–293, and Cys-312; these read GTS and NKT. The segment covering 397 to 406 has biased composition (basic and acidic residues); sequence VESVSVKEEP. The disordered stretch occupies residues 397-487; sequence VESVSVKEEP…ARKGITLDQH (91 aa). The span at 415-425 shows a compositional bias: basic residues; it reads HKPKQATKLKR. Polar residues predominate over residues 448–459; that stretch reads DQLSSPASSING.

It belongs to the sirtuin family. Class I subfamily. Zn(2+) is required as a cofactor.

Its subcellular location is the cytoplasm. It localises to the nucleus. The catalysed reaction is N(6)-acetyl-L-lysyl-[protein] + NAD(+) + H2O = 2''-O-acetyl-ADP-D-ribose + nicotinamide + L-lysyl-[protein]. NAD-dependent histone deacetylase, which could function in telomeric silencing, cell cycle progression and chromosome stability. The polypeptide is NAD-dependent histone deacetylase HST3 (HST3) (Candida albicans (strain SC5314 / ATCC MYA-2876) (Yeast)).